We begin with the raw amino-acid sequence, 427 residues long: Dorsalin-1 (427 aa).

The N-terminal stretch at methionine 1–threonine 20 is a signal peptide. The propeptide occupies arginine 21–arginine 318. Residues asparagine 71, asparagine 136, asparagine 265, and asparagine 292 are each glycosylated (N-linked (GlcNAc...) asparagine). The tract at residues lysine 288–glycine 321 is disordered. Residues alanine 307 to glycine 321 show a composition bias toward basic residues. Disulfide bonds link cysteine 325–cysteine 391, cysteine 354–cysteine 424, and cysteine 358–cysteine 426.

It belongs to the TGF-beta family. In terms of assembly, homodimer; disulfide-linked. In terms of tissue distribution, expressed selectively in the dorsal neural tube. Lower levels seen in kidney and myotomal cells.

The protein localises to the secreted. Appears to regulate cell differentiation within the neural tube. May regulate the differentiation of cell types along the dorsoventral axis of the neural tube, acting in conjunction with distinct ventralizing signals from the notochord and floor plate. Controls the cell differentiation in the neural tube in several ways: (1) promotes the differentiation of cell types that derive from the dorsal neural tube. (2) ensures that the dorsal neural tube is refractory to ventralizing species from the notochord. (3) can diffuse and influence the fate of cells in more ventral regions of the neural tube. This chain is Dorsalin-1 (DSL1), found in Gallus gallus (Chicken).